The following is a 118-amino-acid chain: NADH-quinone oxidoreductase subunit A (118 aa).

3 helical membrane-spanning segments follow: residues 5–25, 61–81, and 90–110; these read YLGI…AFAV, FLYA…YPWA, and FAIV…WYAW.

Belongs to the complex I subunit 3 family. As to quaternary structure, NDH-1 is composed of 14 different subunits. Subunits NuoA, H, J, K, L, M, N constitute the membrane sector of the complex.

Its subcellular location is the cell membrane. The enzyme catalyses a quinone + NADH + 5 H(+)(in) = a quinol + NAD(+) + 4 H(+)(out). Functionally, NDH-1 shuttles electrons from NADH, via FMN and iron-sulfur (Fe-S) centers, to quinones in the respiratory chain. The immediate electron acceptor for the enzyme in this species is believed to be a menaquinone. Couples the redox reaction to proton translocation (for every two electrons transferred, four hydrogen ions are translocated across the cytoplasmic membrane), and thus conserves the redox energy in a proton gradient. The chain is NADH-quinone oxidoreductase subunit A from Heliobacterium modesticaldum (strain ATCC 51547 / Ice1).